A 373-amino-acid polypeptide reads, in one-letter code: COP9 signalosome complex subunit 5 (373 aa).

Positions 66-201 constitute an MPN domain; the sequence is CLISRLATTK…IGAFRTLPSK (136 aa). The Zn(2+) site is built by histidine 147, histidine 149, and aspartate 160. The short motif at 147-160 is the JAMM motif element; the sequence is HSHPGYGCWLSNID. Positions 289-325 are disordered; it reads FTHERSNSISSTSSLTTRHTTDVEMDDQESAQSSLDI. The span at 295–306 shows a compositional bias: low complexity; it reads NSISSTSSLTTR.

Belongs to the peptidase M67A family. CSN5 subfamily. Component of the COP9 signalosome (CSN) complex.

It localises to the cytoplasm. It is found in the nucleus. In terms of biological role, catalytic Component of the COP9 signalosome (CSN) complex that acts as an regulator of the ubiquitin (Ubl) conjugation pathway by mediating the deneddylation of the cullin subunit of SCF-type E3 ubiquitin-protein ligase complexes. The CNS complex is involved in the regulation of the mating pheromone response. The chain is COP9 signalosome complex subunit 5 (RRI1) from Kluyveromyces lactis (strain ATCC 8585 / CBS 2359 / DSM 70799 / NBRC 1267 / NRRL Y-1140 / WM37) (Yeast).